The sequence spans 1339 residues: Retrotransposon Gag-like protein 9 (1339 aa).

Composition is skewed to polar residues over residues 533–545, 679–693, and 700–711; these read TVPT…TQKT, SGTK…TTSG, and TRLSGPGATSTP. Disordered regions lie at residues 533–555, 679–711, 845–864, 880–901, 982–1010, and 1078–1116; these read TVPT…PMST, SGTK…TSTP, GVMS…SRPQ, PATA…LSTL, ATSL…GAGS, and ATDS…PPKE. The span at 891–901 shows a compositional bias: low complexity; that stretch reads RSPASSTLSTL. Polar residues predominate over residues 1078–1106; it reads ATDSGEASTSHTRFTAPGSKSTPHMTSTA.

This is Retrotransposon Gag-like protein 9 from Mus musculus (Mouse).